The chain runs to 490 residues: NAI2-like protein (490 aa).

Positions 1-24 are cleaved as a signal peptide; the sequence is MGRKYVVLGLAVCLFLSSFNEVSC. 2 disordered regions span residues 43-83 and 155-206; these read EEGE…VDKF and AATN…FNKG. Residues 136–163 are a coiled coil; that stretch reads IADERRQRLEDIERKLKAAAATNIVVED. Basic and acidic residues predominate over residues 171–183; sequence KVEETQEVVKFES. Low complexity predominate over residues 184 to 199; it reads ESSSASSESRRQSSSS. Residues 433 to 465 adopt a coiled-coil conformation; it reads TFEKTVANLSRVIEEASQAYEEYHVVVRKWKEE.

The protein is NAI2-like protein of Arabidopsis thaliana (Mouse-ear cress).